We begin with the raw amino-acid sequence, 334 residues long: Aspartate carbamoyltransferase catalytic subunit (334 aa).

Arg-71 and Thr-72 together coordinate carbamoyl phosphate. Lys-99 contributes to the L-aspartate binding site. The carbamoyl phosphate site is built by Arg-121, His-151, and Gln-154. Positions 184 and 239 each coordinate L-aspartate. Carbamoyl phosphate-binding residues include Gly-280 and Pro-281.

The protein belongs to the aspartate/ornithine carbamoyltransferase superfamily. ATCase family. Heterododecamer (2C3:3R2) of six catalytic PyrB chains organized as two trimers (C3), and six regulatory PyrI chains organized as three dimers (R2).

It catalyses the reaction carbamoyl phosphate + L-aspartate = N-carbamoyl-L-aspartate + phosphate + H(+). It functions in the pathway pyrimidine metabolism; UMP biosynthesis via de novo pathway; (S)-dihydroorotate from bicarbonate: step 2/3. Its function is as follows. Catalyzes the condensation of carbamoyl phosphate and aspartate to form carbamoyl aspartate and inorganic phosphate, the committed step in the de novo pyrimidine nucleotide biosynthesis pathway. The chain is Aspartate carbamoyltransferase catalytic subunit from Pseudomonas fluorescens (strain SBW25).